Reading from the N-terminus, the 67-residue chain is UPF0434 protein Tcr_0959 (67 aa).

It belongs to the UPF0434 family.

The protein is UPF0434 protein Tcr_0959 of Hydrogenovibrio crunogenus (strain DSM 25203 / XCL-2) (Thiomicrospira crunogena).